The chain runs to 217 residues: Translation initiation factor IF-3 (217 aa).

Positions K170 to A217 are disordered. The span at T172 to A189 shows a compositional bias: basic and acidic residues.

It belongs to the IF-3 family. As to quaternary structure, monomer.

The protein localises to the cytoplasm. In terms of biological role, IF-3 binds to the 30S ribosomal subunit and shifts the equilibrium between 70S ribosomes and their 50S and 30S subunits in favor of the free subunits, thus enhancing the availability of 30S subunits on which protein synthesis initiation begins. The chain is Translation initiation factor IF-3 from Streptomyces coelicolor (strain ATCC BAA-471 / A3(2) / M145).